A 187-amino-acid polypeptide reads, in one-letter code: Endoribonuclease YbeY (187 aa).

The Zn(2+) site is built by histidine 151, histidine 155, and histidine 161.

It belongs to the endoribonuclease YbeY family. Zn(2+) serves as cofactor.

The protein resides in the cytoplasm. Functionally, single strand-specific metallo-endoribonuclease involved in late-stage 70S ribosome quality control and in maturation of the 3' terminus of the 16S rRNA. The sequence is that of Endoribonuclease YbeY from Prochlorococcus marinus (strain MIT 9313).